Consider the following 177-residue polypeptide: Glutamyl-tRNA(Gln) amidotransferase subunit F, mitochondrial (177 aa).

The transit peptide at 1-16 directs the protein to the mitochondrion; that stretch reads MIRINSRGLTVSTRRF. Residues 148 to 177 are disordered; it reads PAKGETQGSFNVANMNPRNRPFATIRSKQG. Positions 153–164 are enriched in polar residues; sequence TQGSFNVANMNP.

It belongs to the GatF family. Subunit of the heterotrimeric GatFAB amidotransferase (AdT) complex, composed of A, B and F subunits.

The protein resides in the mitochondrion inner membrane. It catalyses the reaction L-glutamyl-tRNA(Gln) + L-glutamine + ATP + H2O = L-glutaminyl-tRNA(Gln) + L-glutamate + ADP + phosphate + H(+). Its function is as follows. Allows the formation of correctly charged Gln-tRNA(Gln) through the transamidation of misacylated Glu-tRNA(Gln) in the mitochondria. The reaction takes place in the presence of glutamine and ATP through an activated gamma-phospho-Glu-tRNA(Gln). Required for proper protein synthesis within the mitochondrion. This chain is Glutamyl-tRNA(Gln) amidotransferase subunit F, mitochondrial, found in Scheffersomyces stipitis (strain ATCC 58785 / CBS 6054 / NBRC 10063 / NRRL Y-11545) (Yeast).